Consider the following 156-residue polypeptide: Cyanate hydratase (156 aa).

Active-site residues include Arg96, Glu99, and Ser122.

The protein belongs to the cyanase family.

It catalyses the reaction cyanate + hydrogencarbonate + 3 H(+) = NH4(+) + 2 CO2. In terms of biological role, catalyzes the reaction of cyanate with bicarbonate to produce ammonia and carbon dioxide. The sequence is that of Cyanate hydratase from Burkholderia thailandensis (strain ATCC 700388 / DSM 13276 / CCUG 48851 / CIP 106301 / E264).